Consider the following 389-residue polypeptide: STE20-related kinase adapter protein alpha (389 aa).

The Protein kinase domain occupies 11-321 (YELLTIIGRG…AGALLNHPFF (311 aa)).

The protein belongs to the protein kinase superfamily. STE Ser/Thr protein kinase family. STE20 subfamily. As to quaternary structure, component of a trimeric complex composed of STK11/LKB1, STRAD (STRADA or STRADB) and CAB39/MO25 (CAB39/MO25alpha or CAB39L/MO25beta): the complex tethers STK11/LKB1 in the cytoplasm and stimulates its catalytic activity. Expressed in brain, hypothalamus, heart and skeletal muscle.

It localises to the nucleus. It is found in the cytoplasm. In terms of biological role, pseudokinase which, in complex with CAB39/MO25 (CAB39/MO25alpha or CAB39L/MO25beta), binds to and activates STK11/LKB1. Adopts a closed conformation typical of active protein kinases and binds STK11/LKB1 as a pseudosubstrate, promoting conformational change of STK11/LKB1 in an active conformation. The polypeptide is STE20-related kinase adapter protein alpha (STRADA) (Gallus gallus (Chicken)).